A 143-amino-acid polypeptide reads, in one-letter code: Large ribosomal subunit protein uL15 (143 aa).

The tract at residues 1-52 (MKLNTLAPAAGSKSAPKRLGRGIGSGLGKTSGKGHKGQKARSGGYHKVGFEG) is disordered. A compositionally biased stretch (gly residues) spans 21-31 (RGIGSGLGKTS).

Belongs to the universal ribosomal protein uL15 family. Part of the 50S ribosomal subunit.

Its function is as follows. Binds to the 23S rRNA. This chain is Large ribosomal subunit protein uL15, found in Francisella tularensis subsp. holarctica (strain FTNF002-00 / FTA).